A 473-amino-acid polypeptide reads, in one-letter code: H(+)/Cl(-) exchange transporter ClcA (473 aa).

Residues 1–32 (MKTDTPSLETPQAARLRRRQLIRQLLERDKTP) lie on the Cytoplasmic side of the membrane. Residues 33 to 69 (LAILFMAAVVGTLVGLAAVAFDKGVAWLQNQRMGALV) traverse the membrane as a helical segment. The Periplasmic segment spans residues 70-76 (HTADNYP). Residues 77–100 (LLLTVAFLCSAVLAMFGYFLVRKY) traverse the membrane as a helical segment. Residues 106–110 (GSGIP) carry the Selectivity filter part_1 motif. A chloride-binding site is contributed by S107. The helical intramembrane region spans 109-116 (IPEIEGAL). The Cytoplasmic portion of the chain corresponds to 117-123 (EDQRPVR). 2 helical membrane passes run 124–141 (WWRV…TLGG) and 148–166 (EGPT…LDIF). The short motif at 146–150 (GREGP) is the Selectivity filter part_2 element. At 167-176 (RLKGDEARHT) the chain is on the cytoplasmic side. 2 intramembrane regions (helical) span residues 177–189 (LLAT…LAAA) and 193–201 (PLAGILFII). The Cytoplasmic segment spans residues 202 to 214 (EEMRPQFRYTLIS). Residues 215-232 (IKAVFIGVIMSTIMYRIF) traverse the membrane as a helical segment. At 233–252 (NHEVALIDVGKLSDAPLNTQ) the chain is on the periplasmic side. Residues 253-281 (WLYLILGIIFGIFGPIFNKWVLGMQDLLH) form a helical membrane-spanning segment. Over 282-287 (RVHGGN) the chain is Cytoplasmic. A helical membrane pass occupies residues 288–309 (ITKWVLMGGAIGGLCGLLGFVA). The Periplasmic portion of the chain corresponds to 310–329 (PATSGGGFNLIPIATAGNFS). 2 helical membrane-spanning segments follow: residues 330–349 (MGML…LCFS) and 355–376 (GIFA…MVVV). The Selectivity filter part_3 motif lies at 355 to 359 (GIFAP). I356 and F357 together coordinate chloride. The Periplasmic portion of the chain corresponds to 377–386 (ELFPQYHLEA). An intramembrane region (helical) is located at residues 387 to 401 (GTFAIAGMGALLAAS). Residues 402-404 (IRA) constitute an intramembrane region (note=Loop between two helices). An intramembrane region (helical) is located at residues 405–416 (PLTGIILVLEMT). An intramembrane region (note=Loop between two helices) is located at residues 417 to 421 (DNYQL). The chain crosses the membrane as a helical span at residues 422-438 (ILPMIITGLGATLLAQF). Residues 439–473 (TGGKPLYSAILARTLAKQEAEQLARSKAASASENT) lie on the Cytoplasmic side of the membrane. Position 445 (Y445) interacts with chloride.

The protein belongs to the chloride channel (TC 2.A.49) family. ClcA subfamily. As to quaternary structure, homodimer.

The protein localises to the cell inner membrane. It carries out the reaction 2 chloride(in) + H(+)(out) = 2 chloride(out) + H(+)(in). Proton-coupled chloride transporter. Functions as antiport system and exchanges two chloride ions for 1 proton. Probably acts as an electrical shunt for an outwardly-directed proton pump that is linked to amino acid decarboxylation, as part of the extreme acid resistance (XAR) response. The protein is H(+)/Cl(-) exchange transporter ClcA of Shigella boydii serotype 18 (strain CDC 3083-94 / BS512).